Consider the following 215-residue polypeptide: Large ribosomal subunit protein uL16 (215 aa).

This sequence belongs to the universal ribosomal protein uL16 family. Component of the small ribosomal subunit. Mature ribosomes consist of a small (40S) and a large (60S) subunit. The 40S subunit contains about 33 different proteins and 1 molecule of RNA (18S). The 60S subunit contains about 49 different proteins and 3 molecules of RNA (25S, 5.8S and 5S).

This Euglena gracilis protein is Large ribosomal subunit protein uL16 (RPL10).